The following is a 765-amino-acid chain: Ankyrin repeat and protein kinase domain-containing protein 1 (765 aa).

In terms of domain architecture, Protein kinase spans 22-289 (EGDWRLVASG…DITIETDILL (268 aa)). Residues 28–36 (VASGGFSQV) and lysine 51 each bind ATP. Residue aspartate 145 is the Proton acceptor of the active site. 12 ANK repeats span residues 361–390 (NKVT…DVDC), 394–423 (SGYT…DANR), 427–456 (DGWA…CVDA), 460–489 (EGWT…DPNL), 493–522 (EGKT…ELDA), 526–555 (NLRT…VPDA), 559–588 (SGYG…SLEL), 592–621 (QGWT…NMGA), 625–654 (VNWT…DPNA), 658–687 (SGWT…NVHA), 691–720 (VGWT…QLDV), and 724–753 (VSCT…SVAT).

Belongs to the protein kinase superfamily. TKL Ser/Thr protein kinase family. Highly expressed in brain and weakly expressed in placenta and spinal cord.

The enzyme catalyses L-seryl-[protein] + ATP = O-phospho-L-seryl-[protein] + ADP + H(+). It catalyses the reaction L-threonyl-[protein] + ATP = O-phospho-L-threonyl-[protein] + ADP + H(+). This chain is Ankyrin repeat and protein kinase domain-containing protein 1 (ANKK1), found in Homo sapiens (Human).